The primary structure comprises 383 residues: Neuropeptide Y receptor type 1 (383 aa).

The Extracellular segment spans residues 1–44 (MNSTLSSQVENHSIYYNFSEKNSQFLAFENDDCHLPLAMIFTLA). N-linked (GlcNAc...) asparagine glycosylation is found at asparagine 2, asparagine 11, and asparagine 17. The helical transmembrane segment at 45–65 (LAYGAVIILGVSGNLALIIII) threads the bilayer. At 66 to 76 (LKQKEMRNVTN) the chain is on the cytoplasmic side. A helical transmembrane segment spans residues 77-97 (ILIVNLSFSDLLVAIMCLPFT). Residues 98–116 (FVYTLMDHWVFGEVMCKLN) are Extracellular-facing. Cysteines 113 and 198 form a disulfide. The helical transmembrane segment at 117 to 137 (PFVQCVSITVSIFSLVLIAVE) threads the bilayer. Residues 138-154 (RHQLIINPRGWRPSNRH) lie on the Cytoplasmic side of the membrane. The chain crosses the membrane as a helical span at residues 155-175 (AYVGIAVIWVLAVASSLPFLI). Residues 176 to 211 (YQVLTDEPFQNVTLDAFKDKYVCFDKFLSDSHRLSY) are Extracellular-facing. The chain crosses the membrane as a helical span at residues 212–232 (TTLLLVLQYFGPLCFIFICYF). Residues 233–260 (KIYIRLKRRNNMMDKMRDNKYRSSETKR) are Cytoplasmic-facing. Residues 261–281 (INVMLLSIVVAFAVCWLPLTI) form a helical membrane-spanning segment. Residues 282 to 299 (FNTVFDWNHQIIATCNHN) lie on the Extracellular side of the membrane. Residues 300–320 (LLFLLCHLTAMISTCINPIFY) traverse the membrane as a helical segment. Topologically, residues 321 to 383 (GFLNKNFQRD…KIHSDDNEKI (63 aa)) are cytoplasmic. The S-palmitoyl cysteine moiety is linked to residue cysteine 338. Serine 368 carries the post-translational modification Phosphoserine.

The protein belongs to the G-protein coupled receptor 1 family.

It localises to the cell membrane. Its function is as follows. Receptor for neuropeptide Y and peptide YY. In Sus scrofa (Pig), this protein is Neuropeptide Y receptor type 1 (NPY1R).